A 547-amino-acid polypeptide reads, in one-letter code: Chaperonin GroEL 1 (547 aa).

Residues 30-33 (TLGP), K51, 87-91 (DGTTT), G415, and D495 each bind ATP.

This sequence belongs to the chaperonin (HSP60) family. Forms a cylinder of 14 subunits composed of two heptameric rings stacked back-to-back. Interacts with the co-chaperonin GroES.

Its subcellular location is the cytoplasm. It catalyses the reaction ATP + H2O + a folded polypeptide = ADP + phosphate + an unfolded polypeptide.. Together with its co-chaperonin GroES, plays an essential role in assisting protein folding. The GroEL-GroES system forms a nano-cage that allows encapsulation of the non-native substrate proteins and provides a physical environment optimized to promote and accelerate protein folding. The sequence is that of Chaperonin GroEL 1 from Rhizobium johnstonii (strain DSM 114642 / LMG 32736 / 3841) (Rhizobium leguminosarum bv. viciae).